The following is a 365-amino-acid chain: Virion host shutoff protein (365 aa).

This sequence belongs to the herpesviridae VHS protein family.

Its subcellular location is the virion. Its function is as follows. Minor structural protein that acts as an endoribonuclease during lytic infection. Degrades host mRNAs in the cytoplasm by cutting them at preferred sites, including some in regions of translation initiation. In Sus scrofa (Pig), this protein is Virion host shutoff protein (VHS).